The primary structure comprises 239 residues: Probable 2-phosphosulfolactate phosphatase (239 aa).

Belongs to the ComB family. The cofactor is Mg(2+).

The catalysed reaction is (2R)-O-phospho-3-sulfolactate + H2O = (2R)-3-sulfolactate + phosphate. The protein is Probable 2-phosphosulfolactate phosphatase of Clostridium botulinum (strain Loch Maree / Type A3).